Reading from the N-terminus, the 269-residue chain is Tetrahydromethanopterin S-methyltransferase subunit C (269 aa).

Transmembrane regions (helical) follow at residues 18–38, 39–59, 62–82, 84–104, 106–126, 152–172, 180–200, and 222–242; these read VLVI…FVPS, LAML…ANTT, VAAY…LGMG, ISAL…ALPF, LVLA…FIVG, ALAI…DLII, IIAL…NACI, and LVFS…VFWI.

The protein belongs to the MtrC family. In terms of assembly, the complex is composed of 8 subunits; MtrA, MtrB, MtrC, MtrD, MtrE, MtrF, MtrG and MtrH.

The protein resides in the cell membrane. The enzyme catalyses 5-methyl-5,6,7,8-tetrahydromethanopterin + coenzyme M + 2 Na(+)(in) = 5,6,7,8-tetrahydromethanopterin + methyl-coenzyme M + 2 Na(+)(out). Its pathway is one-carbon metabolism; methanogenesis from CO(2); methyl-coenzyme M from 5,10-methylene-5,6,7,8-tetrahydromethanopterin: step 2/2. In terms of biological role, part of a complex that catalyzes the formation of methyl-coenzyme M and tetrahydromethanopterin from coenzyme M and methyl-tetrahydromethanopterin. This is an energy-conserving, sodium-ion translocating step. The sequence is that of Tetrahydromethanopterin S-methyltransferase subunit C from Methanococcus vannielii (strain ATCC 35089 / DSM 1224 / JCM 13029 / OCM 148 / SB).